The chain runs to 900 residues: Iodate reductase subunit IdrA (900 aa).

The disordered stretch occupies residues 1-21 (MSENIKQGGAGTFMQAPQDSV). Residues Cys35, Cys38, and Cys42 each coordinate [3Fe-4S] cluster.

Belongs to the prokaryotic molybdopterin-containing oxidoreductase family. In terms of assembly, the iodate reductase (Idr) complex is composed of a molybdopterin-dependent iodate reductase (IdrA and IdrB subunits) and two associated peroxidases (IdrP1 and IdrP2). [3Fe-4S] cluster is required as a cofactor. Requires Mo-bis(molybdopterin guanine dinucleotide) as cofactor.

It localises to the periplasm. Involved in iodate respiration. May accept electrons from cytochrome c551, and catalyze the reduction of iodate (IO(3)(-)) to produce the chemically unstable intermediate hypoiodous acid (HIO). This intermediate then undergoes abiotic disproportionation to yield two molecules of iodide (I(-)) and one molecule of iodate. The resultant iodate subsequently cycles back into the reductive pathway. The initial reduction of iodate may inadvertently produce low levels of incidental toxic H(2)O(2), which is detoxified by IdrP1 and IdrP2. The sequence is that of Iodate reductase subunit IdrA from Denitromonas iodatirespirans.